The sequence spans 359 residues: Type-1 angiotensin II receptor (359 aa).

Residues 1 to 25 (MILNSSTEDSIKRIQDDCPKAGRHN) are Extracellular-facing. A glycan (N-linked (GlcNAc...) asparagine) is linked at Asn4. The angiotensin II site is built by Gln15 and Asp17. Intrachain disulfides connect Cys18/Cys274 and Cys101/Cys180. A helical membrane pass occupies residues 26–55 (YIFVMIPTLYSIIFVVGIFGNSLVVIVIYF). Over 56 to 61 (YMKLKT) the chain is Cytoplasmic. Residues 62 to 89 (VASVFLLNLALADLCFLLTLPLWAVYTA) traverse the membrane as a helical segment. Topologically, residues 90 to 98 (MEYRWPFGN) are extracellular. Residues 99-125 (YLCKIASASVSFNLYASVFLLTCLSID) traverse the membrane as a helical segment. Over 126 to 141 (RYLAIVHPMKSRLRRT) the chain is Cytoplasmic. A helical transmembrane segment spans residues 142–165 (MLVAKVTCIIIWLLAGLASLPTII). The Extracellular portion of the chain corresponds to 166 to 190 (HRNVFFIENTNITVCAFHYESQNST). Arg167 is a binding site for angiotensin II. N-linked (GlcNAc...) asparagine glycosylation occurs at Asn176. Positions 182, 183, and 184 each coordinate angiotensin II. The N-linked (GlcNAc...) asparagine glycan is linked to Asn188. A helical membrane pass occupies residues 191–216 (LPVGLGLTKNILGFLFPFLIILTSYT). Lys199 contacts angiotensin II. Residues 217-239 (LIWKALKKAYEIQKNKPRNDDIF) are Cytoplasmic-facing. Residues 240 to 268 (KIIMAIVLFFFFSWVPHQIFTFLDVLIQL) traverse the membrane as a helical segment. Topologically, residues 269-278 (GIIHDCKIAD) are extracellular. The helical transmembrane segment at 279-304 (IVDTAMPITICLAYFNNCLNPLFYGF) threads the bilayer. Residues 305–359 (LGKKFKKYFLQLLKYIPPKAKSHSSLSTKMSTLSYRPSENGSSSTKKSAPCTEVE) are Cytoplasmic-facing. Positions 326-359 (SHSSLSTKMSTLSYRPSENGSSSTKKSAPCTEVE) are disordered. The segment covering 327–351 (HSSLSTKMSTLSYRPSENGSSSTKK) has biased composition (polar residues). Residue Cys355 is the site of S-palmitoyl cysteine attachment.

It belongs to the G-protein coupled receptor 1 family. In terms of assembly, interacts with MAS1. Interacts with ARRB1. Interacts with FLNA (via filamin repeat 21); increases PKA-mediated phosphorylation of FLNA. Post-translationally, C-terminal Ser or Thr residues may be phosphorylated.

The protein localises to the cell membrane. Functionally, receptor for angiotensin II, a vasoconstricting peptide, which acts as a key regulator of blood pressure and sodium retention by the kidney. The activated receptor in turn couples to G-alpha proteins G(q) (GNAQ, GNA11, GNA14 or GNA15) and thus activates phospholipase C and increases the cytosolic Ca(2+) concentrations, which in turn triggers cellular responses such as stimulation of protein kinase C. The polypeptide is Type-1 angiotensin II receptor (AGTR1) (Sus scrofa (Pig)).